A 92-amino-acid chain; its full sequence is Small ribosomal subunit protein uS19c (92 aa).

Belongs to the universal ribosomal protein uS19 family.

Its subcellular location is the plastid. The protein localises to the chloroplast. Functionally, protein S19 forms a complex with S13 that binds strongly to the 16S ribosomal RNA. In Panax ginseng (Korean ginseng), this protein is Small ribosomal subunit protein uS19c.